We begin with the raw amino-acid sequence, 496 residues long: Hexokinase-2 (496 aa).

A helical membrane pass occupies residues 4–24 (ATVGAVVVGTAAAVAVAALIM). Residues 35-487 (ARARAILKEF…SGIGAALLAA (453 aa)) form the Hexokinase domain. Positions 90-228 (TGDEGGVFYA…EIDMRVSALV (139 aa)) are hexokinase small subdomain. ADP is bound by residues G104, T105, and N106. The D-glucose site is built by T194, K195, N229, and D230. A hexokinase large subdomain region spans residues 229-476 (NDTVGTLAGG…TSIVFKHAND (248 aa)). T253 lines the ADP pocket. N256, E284, and E315 together coordinate D-glucose. G441 serves as a coordination point for ADP.

This sequence belongs to the hexokinase family.

Its subcellular location is the plastid. It localises to the chloroplast outer membrane. It carries out the reaction a D-hexose + ATP = a D-hexose 6-phosphate + ADP + H(+). The enzyme catalyses D-fructose + ATP = D-fructose 6-phosphate + ADP + H(+). The catalysed reaction is D-glucose + ATP = D-glucose 6-phosphate + ADP + H(+). Its pathway is carbohydrate metabolism; hexose metabolism. The protein operates within carbohydrate degradation; glycolysis; D-glyceraldehyde 3-phosphate and glycerone phosphate from D-glucose: step 1/4. Functionally, fructose and glucose phosphorylating enzyme. May be involved in the phosphorylation of glucose during the export from plastids to cytosol. Seems neither to be involved in cell sugar sensing nor in carbohydrate metabolism in tuber. The sequence is that of Hexokinase-2 (HXK2) from Solanum tuberosum (Potato).